The primary structure comprises 134 residues: Probable glycine cleavage system H protein (134 aa).

Residues 29–110 enclose the Lipoyl-binding domain; it reads TVLVGITDYA…PYENWIAKLK (82 aa). Position 70 is an N6-lipoyllysine (Lys70).

This sequence belongs to the GcvH family. In terms of assembly, the glycine cleavage system is composed of four proteins: P, T, L and H. (R)-lipoate is required as a cofactor.

The glycine cleavage system catalyzes the degradation of glycine. The H protein shuttles the methylamine group of glycine from the P protein to the T protein. This Thermococcus gammatolerans (strain DSM 15229 / JCM 11827 / EJ3) protein is Probable glycine cleavage system H protein.